A 555-amino-acid chain; its full sequence is B3 domain-containing protein REM10 (555 aa).

4 consecutive DNA-binding regions (TF-B3) follow at residues 11–103, 150–247, 276–372, and 460–554; these read NPQF…LGPS, CFVA…FPMT, SFVA…LPLN, and SQNR…FCSK.

The protein localises to the nucleus. The chain is B3 domain-containing protein REM10 (REM10) from Arabidopsis thaliana (Mouse-ear cress).